Here is a 68-residue protein sequence, read N- to C-terminus: Protein SlyX homolog (68 aa).

The protein belongs to the SlyX family.

This chain is Protein SlyX homolog, found in Pseudomonas fluorescens (strain SBW25).